Here is a 207-residue protein sequence, read N- to C-terminus: Thiamine-phosphate synthase (207 aa).

4-amino-2-methyl-5-(diphosphooxymethyl)pyrimidine-binding positions include 35–39 (QYRDK) and Asn-67. The Mg(2+) site is built by Asp-68 and Asp-86. Thr-105 serves as a coordination point for 4-amino-2-methyl-5-(diphosphooxymethyl)pyrimidine. Residue 132–134 (SVT) coordinates 2-[(2R,5Z)-2-carboxy-4-methylthiazol-5(2H)-ylidene]ethyl phosphate. Lys-135 provides a ligand contact to 4-amino-2-methyl-5-(diphosphooxymethyl)pyrimidine. 2-[(2R,5Z)-2-carboxy-4-methylthiazol-5(2H)-ylidene]ethyl phosphate is bound at residue Gly-162.

Belongs to the thiamine-phosphate synthase family. Mg(2+) is required as a cofactor.

The enzyme catalyses 2-[(2R,5Z)-2-carboxy-4-methylthiazol-5(2H)-ylidene]ethyl phosphate + 4-amino-2-methyl-5-(diphosphooxymethyl)pyrimidine + 2 H(+) = thiamine phosphate + CO2 + diphosphate. It carries out the reaction 2-(2-carboxy-4-methylthiazol-5-yl)ethyl phosphate + 4-amino-2-methyl-5-(diphosphooxymethyl)pyrimidine + 2 H(+) = thiamine phosphate + CO2 + diphosphate. The catalysed reaction is 4-methyl-5-(2-phosphooxyethyl)-thiazole + 4-amino-2-methyl-5-(diphosphooxymethyl)pyrimidine + H(+) = thiamine phosphate + diphosphate. It participates in cofactor biosynthesis; thiamine diphosphate biosynthesis; thiamine phosphate from 4-amino-2-methyl-5-diphosphomethylpyrimidine and 4-methyl-5-(2-phosphoethyl)-thiazole: step 1/1. In terms of biological role, condenses 4-methyl-5-(beta-hydroxyethyl)thiazole monophosphate (THZ-P) and 2-methyl-4-amino-5-hydroxymethyl pyrimidine pyrophosphate (HMP-PP) to form thiamine monophosphate (TMP). This Pseudomonas putida (strain ATCC 47054 / DSM 6125 / CFBP 8728 / NCIMB 11950 / KT2440) protein is Thiamine-phosphate synthase.